We begin with the raw amino-acid sequence, 121 residues long: Flagellar protein FliT (121 aa).

A required for homodimerization region spans residues 1 to 50 (MNHAPHLYFAWQQLVEKSQLMLRLATEEQWDELIASEMAYVNAVQEIAHL). Residues 60-98 (MQEQLRPMLRLILDNESKVKQLLQIRMDELAKLVGQSSV) form a fliD binding region.

This sequence belongs to the FliT family. In terms of assembly, homodimer. Interacts with FliD and FlhC.

The protein localises to the cytoplasm. The protein resides in the cytosol. Dual-function protein that regulates the transcription of class 2 flagellar operons and that also acts as an export chaperone for the filament-capping protein FliD. As a transcriptional regulator, acts as an anti-FlhDC factor; it directly binds FlhC, thus inhibiting the binding of the FlhC/FlhD complex to class 2 promoters, resulting in decreased expression of class 2 flagellar operons. As a chaperone, effects FliD transition to the membrane by preventing its premature polymerization, and by directing it to the export apparatus. In Escherichia coli O8 (strain IAI1), this protein is Flagellar protein FliT.